Here is a 315-residue protein sequence, read N- to C-terminus: Lipoyl synthase (315 aa).

The [4Fe-4S] cluster site is built by C62, C67, C73, C88, C92, C95, and S302. Residues 74 to 291 enclose the Radical SAM core domain; the sequence is FNHGAATFMI…KKIALKLGFS (218 aa).

The protein belongs to the radical SAM superfamily. Lipoyl synthase family. [4Fe-4S] cluster serves as cofactor.

Its subcellular location is the cytoplasm. The catalysed reaction is [[Fe-S] cluster scaffold protein carrying a second [4Fe-4S](2+) cluster] + N(6)-octanoyl-L-lysyl-[protein] + 2 oxidized [2Fe-2S]-[ferredoxin] + 2 S-adenosyl-L-methionine + 4 H(+) = [[Fe-S] cluster scaffold protein] + N(6)-[(R)-dihydrolipoyl]-L-lysyl-[protein] + 4 Fe(3+) + 2 hydrogen sulfide + 2 5'-deoxyadenosine + 2 L-methionine + 2 reduced [2Fe-2S]-[ferredoxin]. Its pathway is protein modification; protein lipoylation via endogenous pathway; protein N(6)-(lipoyl)lysine from octanoyl-[acyl-carrier-protein]: step 2/2. Functionally, catalyzes the radical-mediated insertion of two sulfur atoms into the C-6 and C-8 positions of the octanoyl moiety bound to the lipoyl domains of lipoate-dependent enzymes, thereby converting the octanoylated domains into lipoylated derivatives. This Ruthia magnifica subsp. Calyptogena magnifica protein is Lipoyl synthase.